Reading from the N-terminus, the 97-residue chain is Co-chaperonin GroES (97 aa).

This sequence belongs to the GroES chaperonin family. As to quaternary structure, heptamer of 7 subunits arranged in a ring. Interacts with the chaperonin GroEL.

The protein resides in the cytoplasm. Functionally, together with the chaperonin GroEL, plays an essential role in assisting protein folding. The GroEL-GroES system forms a nano-cage that allows encapsulation of the non-native substrate proteins and provides a physical environment optimized to promote and accelerate protein folding. GroES binds to the apical surface of the GroEL ring, thereby capping the opening of the GroEL channel. This chain is Co-chaperonin GroES, found in Enterobacter sp. (strain 638).